We begin with the raw amino-acid sequence, 378 residues long: N-acetyldiaminopimelate deacetylase (378 aa).

Asp65 is a catalytic residue. Glu124 (proton acceptor) is an active-site residue.

Belongs to the peptidase M20A family. N-acetyldiaminopimelate deacetylase subfamily.

It catalyses the reaction N-acetyl-(2S,6S)-2,6-diaminopimelate + H2O = (2S,6S)-2,6-diaminopimelate + acetate. Its pathway is amino-acid biosynthesis; L-lysine biosynthesis via DAP pathway; LL-2,6-diaminopimelate from (S)-tetrahydrodipicolinate (acetylase route): step 3/3. Its function is as follows. Catalyzes the conversion of N-acetyl-diaminopimelate to diaminopimelate and acetate. The sequence is that of N-acetyldiaminopimelate deacetylase from Anoxybacillus flavithermus (strain DSM 21510 / WK1).